We begin with the raw amino-acid sequence, 35 residues long: Photosystem II reaction center protein T (35 aa).

The helical transmembrane segment at 3 to 23 threads the bilayer; sequence ALVYTFLLISTLGIIFFAIFF.

It belongs to the PsbT family. In terms of assembly, PSII is composed of 1 copy each of membrane proteins PsbA, PsbB, PsbC, PsbD, PsbE, PsbF, PsbH, PsbI, PsbJ, PsbK, PsbL, PsbM, PsbT, PsbY, PsbZ, Psb30/Ycf12, at least 3 peripheral proteins of the oxygen-evolving complex and a large number of cofactors. It forms dimeric complexes.

It localises to the plastid. The protein resides in the chloroplast thylakoid membrane. Found at the monomer-monomer interface of the photosystem II (PS II) dimer, plays a role in assembly and dimerization of PSII. PSII is a light-driven water plastoquinone oxidoreductase, using light energy to abstract electrons from H(2)O, generating a proton gradient subsequently used for ATP formation. The sequence is that of Photosystem II reaction center protein T from Welwitschia mirabilis (Tree tumbo).